The sequence spans 419 residues: Probable serine/threonine-protein kinase DDB_G0290859 (419 aa).

In terms of domain architecture, Protein kinase spans 40–387 (YDIISTIGSG…ASTIKKHPFF (348 aa)). ATP is bound by residues 46-54 (IGSGSYGEV) and Lys-69. Asp-173 (proton acceptor) is an active-site residue. The 32-residue stretch at 388 to 419 (EGINWEEMANFNVEPPFKPTLSSDDDISYFTN) folds into the AGC-kinase C-terminal domain.

Belongs to the protein kinase superfamily. AGC Ser/Thr protein kinase family.

It carries out the reaction L-seryl-[protein] + ATP = O-phospho-L-seryl-[protein] + ADP + H(+). It catalyses the reaction L-threonyl-[protein] + ATP = O-phospho-L-threonyl-[protein] + ADP + H(+). The chain is Probable serine/threonine-protein kinase DDB_G0290859 from Dictyostelium discoideum (Social amoeba).